The sequence spans 634 residues: 1-deoxy-D-xylulose-5-phosphate synthase (634 aa).

Thiamine diphosphate-binding positions include H74 and 115 to 117 (AHS). D146 is a Mg(2+) binding site. Thiamine diphosphate contacts are provided by residues 147–148 (GA), N176, Y283, and E365. N176 is a Mg(2+) binding site.

It belongs to the transketolase family. DXPS subfamily. In terms of assembly, homodimer. Mg(2+) serves as cofactor. The cofactor is thiamine diphosphate.

It catalyses the reaction D-glyceraldehyde 3-phosphate + pyruvate + H(+) = 1-deoxy-D-xylulose 5-phosphate + CO2. Its pathway is metabolic intermediate biosynthesis; 1-deoxy-D-xylulose 5-phosphate biosynthesis; 1-deoxy-D-xylulose 5-phosphate from D-glyceraldehyde 3-phosphate and pyruvate: step 1/1. In terms of biological role, catalyzes the acyloin condensation reaction between C atoms 2 and 3 of pyruvate and glyceraldehyde 3-phosphate to yield 1-deoxy-D-xylulose-5-phosphate (DXP). This chain is 1-deoxy-D-xylulose-5-phosphate synthase, found in Burkholderia pseudomallei (strain 668).